The primary structure comprises 261 residues: Taurine import ATP-binding protein TauB (261 aa).

Residues 4 to 233 (LQLEGIGAHY…RYSAGESARA (230 aa)) form the ABC transporter domain. Residue 38-45 (GPSGSGKT) coordinates ATP.

The protein belongs to the ABC transporter superfamily. Taurine importer (TC 3.A.1.17.1) family. In terms of assembly, the complex is composed of two ATP-binding proteins (TauB), two transmembrane proteins (TauC) and a solute-binding protein (TauA).

Its subcellular location is the cell inner membrane. The catalysed reaction is taurine(out) + ATP + H2O = taurine(in) + ADP + phosphate + H(+). In terms of biological role, part of the ABC transporter complex TauABC involved in taurine import. Responsible for energy coupling to the transport system. This is Taurine import ATP-binding protein TauB from Pseudomonas syringae pv. tomato (strain ATCC BAA-871 / DC3000).